The sequence spans 431 residues: Glycerol-3-phosphate dehydrogenase [NAD(P)+] (431 aa).

Positions 1–19 (MTSANDKSTDTNVDSTQAE) are enriched in polar residues. The tract at residues 1–25 (MTSANDKSTDTNVDSTQAEQKMAEK) is disordered. NADPH is bound by residues S79, F80, R100, and K173. Sn-glycerol 3-phosphate contacts are provided by K173 and G201. A205 is an NADPH binding site. Sn-glycerol 3-phosphate contacts are provided by K256, D309, S319, R320, and N321. K256 functions as the Proton acceptor in the catalytic mechanism. NADPH is bound at residue R320. E346 contacts NADPH.

It belongs to the NAD-dependent glycerol-3-phosphate dehydrogenase family.

It localises to the cytoplasm. The enzyme catalyses sn-glycerol 3-phosphate + NAD(+) = dihydroxyacetone phosphate + NADH + H(+). The catalysed reaction is sn-glycerol 3-phosphate + NADP(+) = dihydroxyacetone phosphate + NADPH + H(+). It functions in the pathway membrane lipid metabolism; glycerophospholipid metabolism. Catalyzes the reduction of the glycolytic intermediate dihydroxyacetone phosphate (DHAP) to sn-glycerol 3-phosphate (G3P), the key precursor for phospholipid synthesis. This Psychrobacter arcticus (strain DSM 17307 / VKM B-2377 / 273-4) protein is Glycerol-3-phosphate dehydrogenase [NAD(P)+].